The chain runs to 374 residues: Flap endonuclease 1 (374 aa).

The interval 1–105 (MGVKGLNKLI…GELEKRLLRR (105 aa)) is N-domain. D34 lines the Mg(2+) pocket. Residues R47 and R71 each coordinate DNA. Mg(2+) contacts are provided by D87, E159, E161, D180, and D182. Residues 123 to 254 (DHLKFEKRLV…VTAYKLIKEH (132 aa)) are I-domain. E159 provides a ligand contact to DNA. Positions 232 and 234 each coordinate DNA. D234 provides a ligand contact to Mg(2+). The tract at residues 339–347 (VQGRLDSFF) is interaction with PCNA. Residues 353 to 374 (DDGKDKKRKSTAKDTKSKKQKK) form a disordered region.

The protein belongs to the XPG/RAD2 endonuclease family. FEN1 subfamily. As to quaternary structure, interacts with PCNA. Three molecules of RAD27 bind to one PCNA trimer with each molecule binding to one PCNA monomer. PCNA stimulates the nuclease activity without altering cleavage specificity. The cofactor is Mg(2+). Phosphorylated. Phosphorylation upon DNA damage induces relocalization to the nuclear plasma.

It is found in the nucleus. The protein localises to the nucleolus. It localises to the nucleoplasm. Its subcellular location is the mitochondrion. Structure-specific nuclease with 5'-flap endonuclease and 5'-3' exonuclease activities involved in DNA replication and repair. During DNA replication, cleaves the 5'-overhanging flap structure that is generated by displacement synthesis when DNA polymerase encounters the 5'-end of a downstream Okazaki fragment. It enters the flap from the 5'-end and then tracks to cleave the flap base, leaving a nick for ligation. Also involved in the long patch base excision repair (LP-BER) pathway, by cleaving within the apurinic/apyrimidinic (AP) site-terminated flap. Acts as a genome stabilization factor that prevents flaps from equilibrating into structures that lead to duplications and deletions. Also possesses 5'-3' exonuclease activity on nicked or gapped double-stranded DNA, and exhibits RNase H activity. Also involved in replication and repair of rDNA and in repairing mitochondrial DNA. This is Flap endonuclease 1 from Candida tropicalis (strain ATCC MYA-3404 / T1) (Yeast).